Reading from the N-terminus, the 199-residue chain is Holliday junction branch migration complex subunit RuvA (199 aa).

Residues 1-64 (MFAYIKGTVE…EDIAVLYGFG (64 aa)) form a domain I region. The segment at 65–143 (TVEELTMFEM…KEQLTSSIPM (79 aa)) is domain II. Positions 144 to 151 (TSPENNEV) are flexible linker. The segment at 152–199 (TGDSVLSEAVSALMVLGYGSAEASSTISGIYEKGISVEELVKKALKSL) is domain III.

This sequence belongs to the RuvA family. As to quaternary structure, homotetramer. Forms an RuvA(8)-RuvB(12)-Holliday junction (HJ) complex. HJ DNA is sandwiched between 2 RuvA tetramers; dsDNA enters through RuvA and exits via RuvB. An RuvB hexamer assembles on each DNA strand where it exits the tetramer. Each RuvB hexamer is contacted by two RuvA subunits (via domain III) on 2 adjacent RuvB subunits; this complex drives branch migration. In the full resolvosome a probable DNA-RuvA(4)-RuvB(12)-RuvC(2) complex forms which resolves the HJ.

It localises to the cytoplasm. The RuvA-RuvB-RuvC complex processes Holliday junction (HJ) DNA during genetic recombination and DNA repair, while the RuvA-RuvB complex plays an important role in the rescue of blocked DNA replication forks via replication fork reversal (RFR). RuvA specifically binds to HJ cruciform DNA, conferring on it an open structure. The RuvB hexamer acts as an ATP-dependent pump, pulling dsDNA into and through the RuvAB complex. HJ branch migration allows RuvC to scan DNA until it finds its consensus sequence, where it cleaves and resolves the cruciform DNA. The protein is Holliday junction branch migration complex subunit RuvA of Ruminiclostridium cellulolyticum (strain ATCC 35319 / DSM 5812 / JCM 6584 / H10) (Clostridium cellulolyticum).